The chain runs to 382 residues: Mitogen-activated protein kinase 9 (382 aa).

The Protein kinase domain maps to 26-321; sequence YQQLKPIGSG…VDEALRHPYI (296 aa). Residues 33–38 and K55 each bind ATP; that span reads GSGAQG. The Proton acceptor role is filled by D151. At T183 the chain carries Phosphothreonine. The TXY signature appears at 183–185; sequence TPY. Residue Y185 is modified to Phosphotyrosine.

Belongs to the protein kinase superfamily. CMGC Ser/Thr protein kinase family. MAP kinase subfamily. It depends on Mg(2+) as a cofactor. Dually phosphorylated on Thr-183 and Tyr-185, which activates the enzyme. As to expression, expressed in the neuroepithelium of developing brain at stages 16 to 26.

The enzyme catalyses L-seryl-[protein] + ATP = O-phospho-L-seryl-[protein] + ADP + H(+). It carries out the reaction L-threonyl-[protein] + ATP = O-phospho-L-threonyl-[protein] + ADP + H(+). Its activity is regulated as follows. Activated by threonine and tyrosine phosphorylation. Responds to activation by environmental stress and pro-inflammatory cytokines by phosphorylating a number of transcription factors, primarily components of AP-1 such as JUN and ATF2 and thus regulates AP-1 transcriptional activity. May play a role in the development of the central nervous system during embryogenesis. May play a role in the regulation of the circadian clock. The protein is Mitogen-activated protein kinase 9 (MAPK9) of Gallus gallus (Chicken).